The sequence spans 269 residues: 4-hydroxy-tetrahydrodipicolinate reductase (269 aa).

NAD(+) contacts are provided by residues Gly-10–Met-15, Glu-36, Gly-99–Thr-101, and Ala-123–Phe-126. Catalysis depends on His-156, which acts as the Proton donor/acceptor. His-157 provides a ligand contact to (S)-2,3,4,5-tetrahydrodipicolinate. Residue Lys-160 is the Proton donor of the active site. Gly-166–Thr-167 is a binding site for (S)-2,3,4,5-tetrahydrodipicolinate.

It belongs to the DapB family.

It localises to the cytoplasm. The enzyme catalyses (S)-2,3,4,5-tetrahydrodipicolinate + NAD(+) + H2O = (2S,4S)-4-hydroxy-2,3,4,5-tetrahydrodipicolinate + NADH + H(+). The catalysed reaction is (S)-2,3,4,5-tetrahydrodipicolinate + NADP(+) + H2O = (2S,4S)-4-hydroxy-2,3,4,5-tetrahydrodipicolinate + NADPH + H(+). It functions in the pathway amino-acid biosynthesis; L-lysine biosynthesis via DAP pathway; (S)-tetrahydrodipicolinate from L-aspartate: step 4/4. Functionally, catalyzes the conversion of 4-hydroxy-tetrahydrodipicolinate (HTPA) to tetrahydrodipicolinate. This chain is 4-hydroxy-tetrahydrodipicolinate reductase, found in Neisseria gonorrhoeae (strain ATCC 700825 / FA 1090).